We begin with the raw amino-acid sequence, 94 residues long: Aspartyl/glutamyl-tRNA(Asn/Gln) amidotransferase subunit C (94 aa).

This sequence belongs to the GatC family. As to quaternary structure, heterotrimer of A, B and C subunits.

It carries out the reaction L-glutamyl-tRNA(Gln) + L-glutamine + ATP + H2O = L-glutaminyl-tRNA(Gln) + L-glutamate + ADP + phosphate + H(+). The enzyme catalyses L-aspartyl-tRNA(Asn) + L-glutamine + ATP + H2O = L-asparaginyl-tRNA(Asn) + L-glutamate + ADP + phosphate + 2 H(+). In terms of biological role, allows the formation of correctly charged Asn-tRNA(Asn) or Gln-tRNA(Gln) through the transamidation of misacylated Asp-tRNA(Asn) or Glu-tRNA(Gln) in organisms which lack either or both of asparaginyl-tRNA or glutaminyl-tRNA synthetases. The reaction takes place in the presence of glutamine and ATP through an activated phospho-Asp-tRNA(Asn) or phospho-Glu-tRNA(Gln). This chain is Aspartyl/glutamyl-tRNA(Asn/Gln) amidotransferase subunit C, found in Carboxydothermus hydrogenoformans (strain ATCC BAA-161 / DSM 6008 / Z-2901).